The following is a 1133-amino-acid chain: Fas-binding factor 1 (1133 aa).

Disordered stretches follow at residues 89–198 and 211–544; these read LGLK…TPIR and IMAT…VPVQ. Residues 102–113 show a composition bias toward basic and acidic residues; the sequence is AAKDPGKGELPN. Residues 125–134 show a composition bias toward low complexity; the sequence is KKSLPSPSSS. Residue serine 142 is modified to Phosphoserine. Positions 165–182 are enriched in polar residues; sequence PPVTQSKTASDKSPSTVR. 2 stretches are compositionally biased toward basic and acidic residues: residues 221–245 and 259–276; these read PKAE…DELL and TGEH…RPQD. Residues 277-286 are compositionally biased toward acidic residues; sequence SEDMWGDEDF. Over residues 295-310 the composition is skewed to low complexity; that stretch reads VVSSEGRQSRRQSVSR. A compositionally biased stretch (polar residues) spans 325–336; it reads SKQSPPMASSPI. The segment covering 415-424 has biased composition (basic and acidic residues); that stretch reads ASKEEKEDWL. A compositionally biased stretch (polar residues) spans 459 to 469; sequence SGSQPLTSTQG. The segment covering 473–482 has biased composition (low complexity); sequence AAAGGSSGTT. 2 coiled-coil regions span residues 577–727 and 773–870; these read AELQ…VDAA and IRQR…EEQK. Lysine 960 participates in a covalent cross-link: Glycyl lysine isopeptide (Lys-Gly) (interchain with G-Cter in SUMO2). Residues 1062-1085 form a disordered region; that stretch reads AASSQSALMPPAPTTRWCSQPPTG.

May interact with FAS cytoplasmic domain. Interacts with PARD3. Interacts with TRAPPC14. In terms of tissue distribution, present in various epithelial cells (at protein level).

It localises to the cytoplasm. The protein localises to the cytoskeleton. Its subcellular location is the microtubule organizing center. It is found in the centrosome. The protein resides in the centriole. It localises to the spindle pole. The protein localises to the cell junction. In terms of biological role, keratin-binding protein required for epithelial cell polarization. Involved in apical junction complex (AJC) assembly via its interaction with PARD3. Required for ciliogenesis. The chain is Fas-binding factor 1 (FBF1) from Homo sapiens (Human).